The sequence spans 260 residues: Protein FAM220A (260 aa).

Disordered stretches follow at residues 1-75 and 129-158; these read MKAG…SKAS and GSDWPGREPRATDNRGQYLKGESWVSGRPG. Residues 35–47 show a composition bias toward polar residues; it reads RNPSPSVVPSWTD.

Interacts with transcriptional activator STAT3; the interaction occurs in both the nucleus and the cytoplasm, is enhanced by IL6 and promotes STAT3 dephosphorylation, leading to negative regulation of STAT3 transcriptional activator activity. Can interact with both unphosphorylated and phosphorylated STAT3 but interacts preferentially with phosphorylated STAT3 in the nucleus. Interacts with protein phosphatase PTPN2/TC45; this promotes interaction of PTPN2 with STAT3, leading to dephosphorylation of STAT3 by PTPN2. As to expression, expressed at high levels in the testis where it is detected within elongated spermatids during the late stages (steps 9-16) of haploid germ cell development and in the tubular lumen (at protein level).

The protein localises to the nucleus. Its subcellular location is the cytoplasm. It is found in the cytoplasmic vesicle. The protein resides in the secretory vesicle. It localises to the acrosome. Functionally, promotes dephosphorylation of transcriptional activator STAT3 by interacting with both STAT3 and protein phosphatase PTPN2. This promotes interaction of PTPN2 with STAT3 and mediates STAT3 dephosphorylation by PTPN2, leading to negative regulation of STAT3 transcriptional activator activity. May be required for spermiogenesis or sperm function. In Mus musculus (Mouse), this protein is Protein FAM220A.